Consider the following 302-residue polypeptide: Deoxyhypusine hydroxylase (302 aa).

Met1 is modified (N-acetylmethionine). HEAT-like PBS-type repeat units lie at residues Leu54–Asp80, Val87–Asp113, Glu175–Cys201, Phe206–Arg232, and Val239–Asp265. The Fe cation site is built by His56, His89, and Glu90. The Fe cation site is built by His208, His241, and Glu242.

It belongs to the deoxyhypusine hydroxylase family. The cofactor is Fe(2+).

It catalyses the reaction [eIF5A protein]-deoxyhypusine + AH2 + O2 = [eIF5A protein]-hypusine + A + H2O. It participates in protein modification; eIF5A hypusination. Functionally, catalyzes the hydroxylation of the N(6)-(4-aminobutyl)-L-lysine intermediate produced by deoxyhypusine synthase/DHPS on a critical lysine of the eukaryotic translation initiation factor 5A/eIF-5A. This is the second step of the post-translational modification of that lysine into an unusual amino acid residue named hypusine. Hypusination is unique to mature eIF-5A factor and is essential for its function. The chain is Deoxyhypusine hydroxylase (Dohh) from Rattus norvegicus (Rat).